The sequence spans 359 residues: Adenosine deaminase (359 aa).

Zn(2+) contacts are provided by H15 and H17. Substrate is bound by residues H17, D19, and G184. Position 213 (H213) interacts with Zn(2+). The Proton donor role is filled by E216. D295 is a binding site for Zn(2+). D296 lines the substrate pocket.

The protein belongs to the metallo-dependent hydrolases superfamily. Adenosine and AMP deaminases family. Zn(2+) is required as a cofactor.

It is found in the cell membrane. Its subcellular location is the cell junction. The protein localises to the cytoplasmic vesicle lumen. The protein resides in the cytoplasm. It localises to the lysosome. The catalysed reaction is adenosine + H2O + H(+) = inosine + NH4(+). The enzyme catalyses 2'-deoxyadenosine + H2O + H(+) = 2'-deoxyinosine + NH4(+). Catalyzes the hydrolytic deamination of adenosine and 2-deoxyadenosine. Plays an important role in purine metabolism and in adenosine homeostasis. Modulates signaling by extracellular adenosine, and so contributes indirectly to cellular signaling events. May act as a positive regulator of T-cell coactivation. The sequence is that of Adenosine deaminase (ada) from Danio rerio (Zebrafish).